Consider the following 271-residue polypeptide: tRNA (guanine-N(1)-)-methyltransferase (271 aa).

S-adenosyl-L-methionine is bound by residues glycine 120 and 145 to 150 (IGDYVL).

The protein belongs to the RNA methyltransferase TrmD family. In terms of assembly, homodimer.

Its subcellular location is the cytoplasm. The enzyme catalyses guanosine(37) in tRNA + S-adenosyl-L-methionine = N(1)-methylguanosine(37) in tRNA + S-adenosyl-L-homocysteine + H(+). Specifically methylates guanosine-37 in various tRNAs. This is tRNA (guanine-N(1)-)-methyltransferase from Bifidobacterium longum subsp. infantis (strain ATCC 15697 / DSM 20088 / JCM 1222 / NCTC 11817 / S12).